The following is a 232-amino-acid chain: UPF0502 protein Aave_3438 (232 aa).

It belongs to the UPF0502 family.

This Paracidovorax citrulli (strain AAC00-1) (Acidovorax citrulli) protein is UPF0502 protein Aave_3438.